Consider the following 185-residue polypeptide: Elongation factor P (185 aa).

It belongs to the elongation factor P family.

Its subcellular location is the cytoplasm. The protein operates within protein biosynthesis; polypeptide chain elongation. Functionally, involved in peptide bond synthesis. Stimulates efficient translation and peptide-bond synthesis on native or reconstituted 70S ribosomes in vitro. Probably functions indirectly by altering the affinity of the ribosome for aminoacyl-tRNA, thus increasing their reactivity as acceptors for peptidyl transferase. The chain is Elongation factor P from Bordetella avium (strain 197N).